A 192-amino-acid polypeptide reads, in one-letter code: Phosphoheptose isomerase (192 aa).

One can recognise an SIS domain in the interval 34–192 (LADALGNGKK…LEKRLFGERR (159 aa)). 49–51 (NGG) provides a ligand contact to substrate. Zn(2+) contacts are provided by His58 and Glu62. Residues Glu62, 91 to 92 (ND), 117 to 119 (STS), Ser122, and Gln169 contribute to the substrate site. 2 residues coordinate Zn(2+): Gln169 and His177.

The protein belongs to the SIS family. GmhA subfamily. In terms of assembly, homotetramer. The cofactor is Zn(2+).

It is found in the cytoplasm. It carries out the reaction 2 D-sedoheptulose 7-phosphate = D-glycero-alpha-D-manno-heptose 7-phosphate + D-glycero-beta-D-manno-heptose 7-phosphate. It participates in carbohydrate biosynthesis; D-glycero-D-manno-heptose 7-phosphate biosynthesis; D-glycero-alpha-D-manno-heptose 7-phosphate and D-glycero-beta-D-manno-heptose 7-phosphate from sedoheptulose 7-phosphate: step 1/1. In terms of biological role, catalyzes the isomerization of sedoheptulose 7-phosphate in D-glycero-D-manno-heptose 7-phosphate. In Geotalea daltonii (strain DSM 22248 / JCM 15807 / FRC-32) (Geobacter daltonii), this protein is Phosphoheptose isomerase.